The chain runs to 300 residues: Formyltetrahydrofolate deformylase (300 aa).

Positions 21 to 102 (RLLVSCPDQP…MTWSLTLASE (82 aa)) constitute an ACT domain. Asp244 is a catalytic residue.

It belongs to the PurU family.

The enzyme catalyses (6R)-10-formyltetrahydrofolate + H2O = (6S)-5,6,7,8-tetrahydrofolate + formate + H(+). Its pathway is purine metabolism; IMP biosynthesis via de novo pathway; formate from 10-formyl-5,6,7,8-tetrahydrofolate: step 1/1. Catalyzes the hydrolysis of 10-formyltetrahydrofolate (formyl-FH4) to formate and tetrahydrofolate (FH4). This Bacillus subtilis (strain 168) protein is Formyltetrahydrofolate deformylase.